The primary structure comprises 477 residues: Ribulose bisphosphate carboxylase large chain (477 aa).

The propeptide occupies M1–S2. Position 3 is an N-acetylproline (P3). K14 carries the N6,N6,N6-trimethyllysine modification. Substrate-binding residues include N123 and T173. K175 (proton acceptor) is an active-site residue. Residue K177 coordinates substrate. The Mg(2+) site is built by K201, D203, and E204. At K201 the chain carries N6-carboxylysine. The active-site Proton acceptor is H294. 3 residues coordinate substrate: R295, H327, and S379.

It belongs to the RuBisCO large chain family. Type I subfamily. As to quaternary structure, heterohexadecamer of 8 large chains and 8 small chains; disulfide-linked. The disulfide link is formed within the large subunit homodimers. Requires Mg(2+) as cofactor. Post-translationally, the disulfide bond which can form in the large chain dimeric partners within the hexadecamer appears to be associated with oxidative stress and protein turnover.

It is found in the plastid. It localises to the chloroplast. It carries out the reaction 2 (2R)-3-phosphoglycerate + 2 H(+) = D-ribulose 1,5-bisphosphate + CO2 + H2O. The catalysed reaction is D-ribulose 1,5-bisphosphate + O2 = 2-phosphoglycolate + (2R)-3-phosphoglycerate + 2 H(+). Functionally, ruBisCO catalyzes two reactions: the carboxylation of D-ribulose 1,5-bisphosphate, the primary event in carbon dioxide fixation, as well as the oxidative fragmentation of the pentose substrate in the photorespiration process. Both reactions occur simultaneously and in competition at the same active site. This is Ribulose bisphosphate carboxylase large chain from Nicotiana tomentosiformis (Tobacco).